We begin with the raw amino-acid sequence, 95 residues long: Small ribosomal subunit protein uS19 (95 aa).

It belongs to the universal ribosomal protein uS19 family.

Protein S19 forms a complex with S13 that binds strongly to the 16S ribosomal RNA. The polypeptide is Small ribosomal subunit protein uS19 (Thermosipho africanus (strain TCF52B)).